The primary structure comprises 411 residues: Branched-chain-amino-acid aminotransferase, cytosolic (411 aa).

Lys247 bears the N6-(pyridoxal phosphate)lysine mark.

This sequence belongs to the class-IV pyridoxal-phosphate-dependent aminotransferase family. Homodimer. It depends on pyridoxal 5'-phosphate as a cofactor. Post-translationally, the N-terminus is blocked. In terms of tissue distribution, brain, low expression in ovary and placenta, but not found in liver, kidney, and skeletal muscle.

It localises to the cytoplasm. The enzyme catalyses L-leucine + 2-oxoglutarate = 4-methyl-2-oxopentanoate + L-glutamate. It carries out the reaction L-isoleucine + 2-oxoglutarate = (S)-3-methyl-2-oxopentanoate + L-glutamate. It catalyses the reaction L-valine + 2-oxoglutarate = 3-methyl-2-oxobutanoate + L-glutamate. Functionally, catalyzes the first reaction in the catabolism of the essential branched chain amino acids leucine, isoleucine, and valine. This chain is Branched-chain-amino-acid aminotransferase, cytosolic (Bcat1), found in Rattus norvegicus (Rat).